Here is a 391-residue protein sequence, read N- to C-terminus: 4-hydroxy-3-methylbut-2-en-1-yl diphosphate synthase (flavodoxin) (391 aa).

[4Fe-4S] cluster-binding residues include cysteine 282, cysteine 285, cysteine 317, and glutamate 324.

It belongs to the IspG family. [4Fe-4S] cluster is required as a cofactor.

The catalysed reaction is (2E)-4-hydroxy-3-methylbut-2-enyl diphosphate + oxidized [flavodoxin] + H2O + 2 H(+) = 2-C-methyl-D-erythritol 2,4-cyclic diphosphate + reduced [flavodoxin]. It participates in isoprenoid biosynthesis; isopentenyl diphosphate biosynthesis via DXP pathway; isopentenyl diphosphate from 1-deoxy-D-xylulose 5-phosphate: step 5/6. Functionally, converts 2C-methyl-D-erythritol 2,4-cyclodiphosphate (ME-2,4cPP) into 1-hydroxy-2-methyl-2-(E)-butenyl 4-diphosphate. In Acidothermus cellulolyticus (strain ATCC 43068 / DSM 8971 / 11B), this protein is 4-hydroxy-3-methylbut-2-en-1-yl diphosphate synthase (flavodoxin).